A 1446-amino-acid polypeptide reads, in one-letter code: MALDQTALFQKLLEQIALPADVAHYPGFKTGQVEQVIVHETSKRWTFKLHFDNVLPFAVYTAFEEHLEAAFQAIAAVSIEISTDAKELDGGVLAAYWEYVVNHSGIQSSLLHELCAKETPYIEGRKVLLVVENDIVKTFFINQAQTTIQAGYKRLGFPNFAIQPLIDESASQKSIEDFQAKRAVQDAERAQAAAEAIKKNEALKEKRKTEGKPVDGPIVMGRGINPAEPVRQMISITEEERSIVIEGFIFDKEVRVLRSGRQLLILKMTDYSSSFTVKKFSRDASDESLFAAIDKGMWFKVRGSVQEDNFMRDLTVNANDLVEVSHPKREDTATDGKRIEMHLHTNMSQMDATNPIGDYVKQAAKWGQPAIAVTDHYNLQAFPDAYAAGKKNGVKILYGVEVNLVNDGTPVVYNLRDQVLESAEYVIFDVETTGLSAVYDSIIELAAVKMRDGEVVASFDEFIDPERPLSAFTTQLTSITNEMVHGAKKEAEVLAMFKEFTGDAVLAGHNVSFDMGFLNAGYERNDIDLIDNPVIDTLELSRMLHPEYKNHKLDSLTKRYKINLEHHHRANADAESTGYLLYKLEKEAAENYDMVNVNQLNDRVGVGEFYKQARPAHAVLMAQTQAGLKNLFKLVSASMTEYYYRTPRLPKSKLDALREGILVGSACSNGEVFEAMMQKGYNEALDRAKYYDYIEVMPKAVYAPLLERELVRDNRALEEIIRNLVKVGEKLNKPVVATGDAHYLNPEDAIYRKILIHSMGGANPLNRSKLPDVHFRSTDEMLTAFDFLGPELAQELVVANPQKIADQIDEIVPVKDKLYTPKMAGAEDEIQTLTMNRAHELYGAELPEIVEARLKKELKSIIGNGFSVIYLISQKLVYKSGKDGYLVGSRGSVGSSLVATMTGITEVNPLPPHYRCSNCHYSEFFTKGEVGSGYDLADKDCPECGTPLDKDGHDIPFETFLGFHGDKVPDIDLNFSGDYQPVAHNYTKVLFGENNVFRAGTIGTVADKTAYGYVKAYERDTEQTFRGAEVDRLAKGSTGVKRTTGQHPAGIIVVPDYMDIYDFTPIQFPADDQDAAWKTTHFDFHSIHDNILKLDILGHDDPTMIRMLQDLSGIDPKSIPTDDPGVMALFSGTDSLGVTPEQINSKMGTLGVPEFGTRFVRGMLEETHPTTFSELLQISGLSHGTDVWLGNAEELINKGVVTLKDVIGCRDNIMMDLIHWGMDDSMSFNIMERVRKGKGIPDDWQQAMRDNENVPDWYIDSCLKIKYMFPKAHATAYILMALRIAYFKVYFPIIYYCAYFSVRASDFDLVAMAQGKEGVKARMKEITDKGMEASTKEKNLLTVLEIANECLERGITIKMVDIEKSDSSDFLIQDDHTLLAPFRAVPSLGDNVAKQIVSAREEKPFLSKEDLSNRGKVSKTLIEYLTENNVLNDLPDENQLSLFDMM.

Residues Tyr-425–Leu-581 enclose the Exonuclease domain.

The protein belongs to the DNA polymerase type-C family. PolC subfamily.

The protein localises to the cytoplasm. The catalysed reaction is DNA(n) + a 2'-deoxyribonucleoside 5'-triphosphate = DNA(n+1) + diphosphate. In terms of biological role, required for replicative DNA synthesis. This DNA polymerase also exhibits 3' to 5' exonuclease activity. This is DNA polymerase III PolC-type from Latilactobacillus sakei subsp. sakei (strain 23K) (Lactobacillus sakei subsp. sakei).